Here is a 340-residue protein sequence, read N- to C-terminus: MVATTSSGGSSVGWPSRLSGVRLHLVTGKGGTGKSTIAAALALTLAAGGRKVLLVEVEGRQGIAQLFDVPPLPYQELKIATAERGGQVNALAIDIEAAFLEYLDMFYNLGIAGRAMRRIGAVEFATTIAPGLRDVLLTGKIKETVVRLDKNKLPVYDAIVVDAPPTGRIARFLDVTKAVSDLAKGGPVHAQSEGVVKLLHSNQTAIHLVTLLEALPVQETLEAIEELAQMELPIGSVIVNRNIPAHLEPQDLAKAAEGEVDADSVRAGLLTAGVKLPDADFAGLLTETIQHATRITARAEIAQQLDALQVPRLELPTVSDGVDLGSLYELSESLAQQGVR.

ATP is bound by residues G31, G33, K34, S35, T36, N240, P316, and V318.

This sequence belongs to the arsA ATPase family. BagA/BagB subfamily. In terms of assembly, forms a heterodimer composed of BagA and BagB. Interacts with Rv1509. Also interacts with a large number of proteins, including proteins required for mycolic acid biosynthesis.

With respect to regulation, the ATPase activity of the BagAB complex is not stimulated by antimonite, an arsenite substitute, suggesting that BagAB is not a transporter for this family of elements. Functionally, component of the heterodimeric BagAB ATPase complex, whose two subunits are actively involved in ATP hydrolysis. The ATPase activity is required to mediate resistance against nitric oxide (NO) and elevated levels of glycerol. The chain is ATPase BagA from Mycobacterium tuberculosis (strain ATCC 25618 / H37Rv).